We begin with the raw amino-acid sequence, 116 residues long: Mercuric transport protein MerT (116 aa).

2 helical membrane passes run 16-36 (LAAI…ALGF) and 46-66 (VLEP…FFAW). Residues Cys24 and Cys25 each coordinate Hg(2+). 2 residues coordinate Hg(2+): Cys76 and Cys82. A helical transmembrane segment spans residues 94–114 (IFWFVAVLVLVALGFPYVMPF).

It belongs to the MerT family.

Its subcellular location is the cell inner membrane. Involved in mercury resistance. Probably transfers a mercuric ion from the periplasmic Hg(2+)-binding protein MerP to the cytoplasmic mercuric reductase MerA. The protein is Mercuric transport protein MerT of Acinetobacter calcoaceticus.